Here is a 100-residue protein sequence, read N- to C-terminus: Integration host factor subunit alpha (100 aa).

Residues 53–73 form a disordered region; that stretch reads FDLRDKRQRPGRNPKTGEEIP.

Belongs to the bacterial histone-like protein family. Heterodimer of an alpha and a beta chain.

Functionally, this protein is one of the two subunits of integration host factor, a specific DNA-binding protein that functions in genetic recombination as well as in transcriptional and translational control. The protein is Integration host factor subunit alpha of Pseudomonas aeruginosa (strain LESB58).